We begin with the raw amino-acid sequence, 451 residues long: Glutamyl-tRNA reductase (451 aa).

Substrate is bound by residues 49 to 52 (TCNR), Ser-109, 114 to 116 (EQQ), and Gln-120. The active-site Nucleophile is Cys-50. 190–195 (GAGAMG) contacts NADP(+).

Belongs to the glutamyl-tRNA reductase family. Homodimer.

It catalyses the reaction (S)-4-amino-5-oxopentanoate + tRNA(Glu) + NADP(+) = L-glutamyl-tRNA(Glu) + NADPH + H(+). It functions in the pathway porphyrin-containing compound metabolism; protoporphyrin-IX biosynthesis; 5-aminolevulinate from L-glutamyl-tRNA(Glu): step 1/2. Catalyzes the NADPH-dependent reduction of glutamyl-tRNA(Glu) to glutamate 1-semialdehyde (GSA). This chain is Glutamyl-tRNA reductase, found in Mycolicibacterium smegmatis (strain ATCC 700084 / mc(2)155) (Mycobacterium smegmatis).